Consider the following 477-residue polypeptide: Exodeoxyribonuclease 7 large subunit (477 aa).

The segment at 452 to 477 (KAAAAPKRVKKSPPPGTSGAQEDLFG) is disordered.

The protein belongs to the XseA family. Heterooligomer composed of large and small subunits.

It localises to the cytoplasm. The catalysed reaction is Exonucleolytic cleavage in either 5'- to 3'- or 3'- to 5'-direction to yield nucleoside 5'-phosphates.. In terms of biological role, bidirectionally degrades single-stranded DNA into large acid-insoluble oligonucleotides, which are then degraded further into small acid-soluble oligonucleotides. This is Exodeoxyribonuclease 7 large subunit from Erythrobacter litoralis (strain HTCC2594).